The sequence spans 619 residues: DNA mismatch repair protein MutL (619 aa).

The interval 358–401 (GGNQFARPSEAREAATRFSITSSREPAASGGSSGGASWPHAQPG) is disordered.

It belongs to the DNA mismatch repair MutL/HexB family.

Functionally, this protein is involved in the repair of mismatches in DNA. It is required for dam-dependent methyl-directed DNA mismatch repair. May act as a 'molecular matchmaker', a protein that promotes the formation of a stable complex between two or more DNA-binding proteins in an ATP-dependent manner without itself being part of a final effector complex. This chain is DNA mismatch repair protein MutL, found in Klebsiella pneumoniae (strain 342).